The chain runs to 275 residues: MSLVLAVYGKGGIGKSTTSANISAALALKGAKVLQIGCDPKHDSTFPITGKLQKTVIEALEEVDFHHEELGAEDIIETGFAGIDCLEAGGPPAGSGCGGYVVGESVTLLQELGLYDKYDVILFDVLGDVVCGGFSAPLNYADYAIIIATNDFDSIFAANRLCMAIQQKSVRYKVKLAGIVANRVDYTTGGGTNMLDQFAEKVGTRLLAKVPYHELIRKSRFAGKTLFAMEDTPGKDDCLIPYNEIADFLIQENPLASVPVPIGDREIFDMVGGWQ.

ATP is bound by residues 12-17 (GIGKST) and K41. Position 16 (S16) interacts with Mg(2+). The [4Fe-4S] cluster site is built by C97 and C131. 182–183 (NR) is a binding site for ATP.

Belongs to the NifH/BchL/ChlL family. As to quaternary structure, homodimer. Protochlorophyllide reductase is composed of three subunits; BchL, BchN and BchB. Requires [4Fe-4S] cluster as cofactor.

It carries out the reaction chlorophyllide a + oxidized 2[4Fe-4S]-[ferredoxin] + 2 ADP + 2 phosphate = protochlorophyllide a + reduced 2[4Fe-4S]-[ferredoxin] + 2 ATP + 2 H2O. It functions in the pathway porphyrin-containing compound metabolism; bacteriochlorophyll biosynthesis (light-independent). Component of the dark-operative protochlorophyllide reductase (DPOR) that uses Mg-ATP and reduced ferredoxin to reduce ring D of protochlorophyllide (Pchlide) to form chlorophyllide a (Chlide). This reaction is light-independent. The L component serves as a unique electron donor to the NB-component of the complex, and binds Mg-ATP. The polypeptide is Light-independent protochlorophyllide reductase iron-sulfur ATP-binding protein (Chlorobium phaeobacteroides (strain DSM 266 / SMG 266 / 2430)).